Consider the following 395-residue polypeptide: Chaperone protein DnaJ 2 (395 aa).

The J domain maps to 10 to 75 (DYYADLGVSK…TKRREYDDLK (66 aa)). Residues 165-242 (GTTIPVELTG…CRGRGTVRRT (78 aa)) form a CR-type zinc finger. Zn(2+) is bound by residues Cys-178, Cys-181, Cys-194, Cys-197, Cys-216, Cys-219, Cys-230, and Cys-233. CXXCXGXG motif repeat units follow at residues 178–185 (CNTCHGSG), 194–201 (CGQCNGSG), 216–223 (CTNCGGTG), and 230–237 (CVDCRGRG).

Belongs to the DnaJ family. Homodimer. It depends on Zn(2+) as a cofactor.

Its subcellular location is the cytoplasm. Functionally, participates actively in the response to hyperosmotic and heat shock by preventing the aggregation of stress-denatured proteins and by disaggregating proteins, also in an autonomous, DnaK-independent fashion. Unfolded proteins bind initially to DnaJ; upon interaction with the DnaJ-bound protein, DnaK hydrolyzes its bound ATP, resulting in the formation of a stable complex. GrpE releases ADP from DnaK; ATP binding to DnaK triggers the release of the substrate protein, thus completing the reaction cycle. Several rounds of ATP-dependent interactions between DnaJ, DnaK and GrpE are required for fully efficient folding. Also involved, together with DnaK and GrpE, in the DNA replication of plasmids through activation of initiation proteins. This is Chaperone protein DnaJ 2 from Corynebacterium efficiens (strain DSM 44549 / YS-314 / AJ 12310 / JCM 11189 / NBRC 100395).